Here is a 1440-residue protein sequence, read N- to C-terminus: Actin cytoskeleton-regulatory complex protein PAN1 (1440 aa).

Residues 1 to 21 show a composition bias toward polar residues; sequence MYNPYQQPSYGAPQQPQQTGY. The tract at residues 1-67 is disordered; that stretch reads MYNPYQQPSY…TGFQPQATGY (67 aa). Residues 39–63 show a composition bias toward low complexity; that stretch reads TGYYQQQPTYQQPGFQPQQTGFQPQ. Positions 117–206 constitute an EH 1 domain; that stretch reads DQSKFEHLFR…EKWSNEVQSF (90 aa). In terms of domain architecture, EF-hand 1 spans 150 to 185; sequence LPPVTLAEIWSLSDTNKSGSLLFPEFALSLHLCNLA. Disordered stretches follow at residues 234 to 285 and 297 to 428; these read EKTS…PLQP and QRQN…KPGQ. Polar residues-rich tracts occupy residues 245–257 and 297–384; these read PSTSFQPQLTGFQ and QRQN…YQPL. The span at 385 to 398 shows a compositional bias: low complexity; the sequence is QSQGTGFQSQGTIQ. Positions 399 to 423 are enriched in polar residues; the sequence is PQGTGFQPQSTGFQPQPTGLSSQPT. Positions 480–569 constitute an EH 2 domain; that stretch reads EKSIYDGIFQ…PELIPPSKKH (90 aa). One can recognise an EF-hand 2 domain in the interval 513–548; the sequence is LARPDLETIWNLADGDNKGKLNKDEFSVAMHLVYRR. Disordered stretches follow at residues 564–629 and 861–1440; these read PPSK…GTMS and RSLP…RVVD. Positions 573–583 are enriched in polar residues; the sequence is SMDSLKNSLRG. A coiled-coil region spans residues 627–686; the sequence is TMSIEQLKKEIREKKILLDAMDSEDRDSSVLSQRDREWNEREIESLKFRILQAHNKLESS. The span at 867 to 876 shows a compositional bias: basic and acidic residues; the sequence is EGSKNGRNEK. Positions 882-914 are enriched in low complexity; it reads TQPTKSQSQSAQSTQSQSQSTQSVQTQPAQPAT. Basic and acidic residues predominate over residues 921 to 984; it reads PEDRAAYIKA…KETETQRETN (64 aa). Residues 985 to 994 show a composition bias toward polar residues; that stretch reads TKSTSQTSKA. Residues 1023 to 1032 show a composition bias toward acidic residues; sequence PEDDSEDEEY. A coiled-coil region spans residues 1024 to 1076; it reads EDDSEDEEYAALMKQKQEMEERRLRKKKEKEERLARLKREMEEMNKEEDSDEE. Over residues 1038–1067 the composition is skewed to basic and acidic residues; the sequence is QKQEMEERRLRKKKEKEERLARLKREMEEM. A compositionally biased stretch (acidic residues) spans 1068 to 1077; it reads NKEEDSDEEP. Residues 1080–1100 are compositionally biased toward polar residues; the sequence is SVPTYTNGSVKSSTQPISQSE. Basic and acidic residues predominate over residues 1101 to 1112; that stretch reads EVPKTEEEKSGE. Low complexity predominate over residues 1140–1155; sequence SKANPFSKNNNPFFKP. The span at 1180 to 1192 shows a compositional bias: acidic residues; sequence DWSDSDDNSSDDD. Positions 1218 to 1230 are enriched in basic and acidic residues; that stretch reads TIEKEETGSKETA. Composition is skewed to pro residues over residues 1232–1255, 1311–1324, 1333–1353, and 1362–1402; these read VPPPTEVAPPPVPAAPPASVPPPI, DVPPIPQSIPPPPQ, APPPPPIPSQVPPPPPPPPSL, and PPAP…PPGG. The region spanning 1405–1422 is the WH2 domain; that stretch reads NIGALLGQITGGKSLKKV. Residues 1420-1430 are compositionally biased toward basic and acidic residues; that stretch reads KKVDDSQKRIA.

The protein belongs to the PAN1 family. As to quaternary structure, component of the PAN1 actin cytoskeleton-regulatory complex.

The protein localises to the cell membrane. Its subcellular location is the endosome membrane. It localises to the cytoplasm. The protein resides in the cytoskeleton. It is found in the actin patch. Component of the PAN1 actin cytoskeleton-regulatory complex required for the internalization of endosomes during actin-coupled endocytosis. The complex links the site of endocytosis to the cell membrane-associated actin cytoskeleton. Mediates uptake of external molecules and vacuolar degradation of plasma membrane proteins. Plays a role in the proper organization of the cell membrane-associated actin cytoskeleton and promotes its destabilization. This Meyerozyma guilliermondii (strain ATCC 6260 / CBS 566 / DSM 6381 / JCM 1539 / NBRC 10279 / NRRL Y-324) (Yeast) protein is Actin cytoskeleton-regulatory complex protein PAN1 (PAN1).